Consider the following 648-residue polypeptide: SRSF protein kinase 1 (648 aa).

The segment at 1–57 (MERKVLALQARKKRTKAKKDKAQRKPETQHRGSAPHSESDIPEQEEEILGSDDDEQE) is disordered. Basic residues predominate over residues 10–22 (ARKKRTKAKKDKA). A compositionally biased stretch (acidic residues) spans 40-57 (DIPEQEEEILGSDDDEQE). Ser-51 bears the Phosphoserine mark. The Protein kinase domain occupies 80–646 (YHVIRKLGWG…AAECLRHPWL (567 aa)). Residues 86–94 (LGWGHFSTV) and Lys-109 contribute to the ATP site. Asp-213 (proton acceptor) is an active-site residue. Disordered stretches follow at residues 238-354 (WQRS…APEI) and 395-464 (PSFL…DSKG). Residues 265 to 276 (KNKKKKLKKKQK) show a composition bias toward basic residues. Basic and acidic residues-rich tracts occupy residues 277–288 (RQAELLEKRMQE) and 304–317 (NKQE…DRPL). Phosphoserine occurs at positions 309, 311, and 333. 2 stretches are compositionally biased toward polar residues: residues 333-343 (SNSIGQDQTLT) and 396-441 (SFLN…TQLE). The residue at position 448 (Thr-448) is a Phosphothreonine. Ser-450 is subject to Phosphoserine. Position 548 is a phosphoserine; by CK2 (Ser-548).

Belongs to the protein kinase superfamily. CMGC Ser/Thr protein kinase family. As to quaternary structure, monomer. Found in a multisubunit complex containing seven proteins, named toposome, which separates entangled circular chromatin DNA during chromosome segregation. Interacts with HHV-1 ICP27 protein. Interacts with DNAJC8 and AHSA1/AHA1 and this mediates formation of a complex with the Hsp70 /Hsp90 machinery. Binds to IGF2BP1, SYNCRIP, HNRNPA2B1 and HNRNPC. Interacts with SAFB/SAFB1 and SAFB2 which inhibits its activity. Mg(2+) serves as cofactor. Predominantly expressed in the testis but is also present at lower levels in heart, spleen, liver, brain, kidney, lung and skeletal muscle. Present in all germinal cells in the seminiferous tubules but not in mature spermatozoa.

The protein resides in the cytoplasm. Its subcellular location is the nucleus. It is found in the nucleoplasm. The protein localises to the nucleus matrix. It localises to the microsome. The protein resides in the nucleus speckle. Its subcellular location is the chromosome. The catalysed reaction is L-seryl-[protein] + ATP = O-phospho-L-seryl-[protein] + ADP + H(+). It catalyses the reaction L-threonyl-[protein] + ATP = O-phospho-L-threonyl-[protein] + ADP + H(+). Its activity is regulated as follows. Activated by phosphorylation on Ser-51 and Ser-548. Its function is as follows. Serine/arginine-rich protein-specific kinase which specifically phosphorylates its substrates at serine residues located in regions rich in arginine/serine dipeptides, known as RS domains and is involved in the phosphorylation of SR splicing factors and the regulation of splicing. Plays a central role in the regulatory network for splicing, controlling the intranuclear distribution of splicing factors in interphase cells and the reorganization of nuclear speckles during mitosis. Can influence additional steps of mRNA maturation, as well as other cellular activities, such as chromatin reorganization in somatic and sperm cells and cell cycle progression. Phosphorylates SFRS2, ZRSR2, LBR and PRM1. Phosphorylates SRSF1 using a directional (C-terminal to N-terminal) and a dual-track mechanism incorporating both processive phosphorylation (in which the kinase stays attached to the substrate after each round of phosphorylation) and distributive phosphorylation steps (in which the kinase and substrate dissociate after each phosphorylation event). The RS domain of SRSF1 binds first to a docking groove in the large lobe of the kinase domain of SRPK1. This induces certain structural changes in SRPK1 and/or RRM2 domain of SRSF1, allowing RRM2 to bind the kinase and initiate phosphorylation. The cycles continue for several phosphorylation steps in a processive manner (steps 1-8) until the last few phosphorylation steps (approximately steps 9-12). During that time, a mechanical stress induces the unfolding of the beta-4 motif in RRM2, which then docks at the docking groove of SRPK1. This also signals RRM2 to begin to dissociate, which facilitates SRSF1 dissociation after phosphorylation is completed. Can mediate hepatitis B virus (HBV) core protein phosphorylation. It plays a negative role in the regulation of HBV replication through a mechanism not involving the phosphorylation of the core protein but by reducing the packaging efficiency of the pregenomic RNA (pgRNA) without affecting the formation of the viral core particles. Can induce splicing of exon 10 in MAPT/TAU. This chain is SRSF protein kinase 1, found in Mus musculus (Mouse).